Reading from the N-terminus, the 320-residue chain is MQNRKTFSWVKEQMTRSIYVSIMIYVITRASISNAYPIFAQQVYENPREATGRIVCANCHLANKPVDIEVPQAVLPDTVFEAVVRIPYDMQLKQVLANGKKGALNVGAVIILPEGFELAPPDRISPEIKEKMGNLSFQFYRPNKRNILVIGPVPGQKYSEIVFPILSPDPATKKDVHFLKYPIYVGGNRGRGQIYPDGNKSNNTVYNATSAGIVSRIARKEKGGYEITIVDASEGRQVVDIIPPGPELLVSEGESIKLDQPLTSNPNVGGFGQGDTEIVLQDPLRVQGLLFFLASVILAQIFLVLKKKQFEKVQLYEMNF.

The signal sequence occupies residues Met-1–Ala-35. Heme is bound by residues Tyr-36, Cys-56, Cys-59, and His-60. Residues Val-286–Lys-306 form a helical membrane-spanning segment.

Belongs to the cytochrome f family. The 4 large subunits of the cytochrome b6-f complex are cytochrome b6, subunit IV (17 kDa polypeptide, petD), cytochrome f and the Rieske protein, while the 4 small subunits are PetG, PetL, PetM and PetN. The complex functions as a dimer. It depends on heme as a cofactor.

The protein resides in the plastid. It is found in the chloroplast thylakoid membrane. Functionally, component of the cytochrome b6-f complex, which mediates electron transfer between photosystem II (PSII) and photosystem I (PSI), cyclic electron flow around PSI, and state transitions. This is Cytochrome f from Phalaenopsis aphrodite subsp. formosana (Moth orchid).